A 117-amino-acid polypeptide reads, in one-letter code: Large ribosomal subunit protein uL24 (117 aa).

Positions Met-1 to Lys-10 are enriched in basic residues. The tract at residues Met-1 to Leu-28 is disordered.

This sequence belongs to the universal ribosomal protein uL24 family. As to quaternary structure, part of the 50S ribosomal subunit.

Functionally, one of two assembly initiator proteins, it binds directly to the 5'-end of the 23S rRNA, where it nucleates assembly of the 50S subunit. Located at the polypeptide exit tunnel on the outside of the subunit. The polypeptide is Large ribosomal subunit protein uL24 (Methanobrevibacter smithii (strain ATCC 35061 / DSM 861 / OCM 144 / PS)).